Reading from the N-terminus, the 129-residue chain is Small ribosomal subunit protein uS9 (129 aa).

The segment at 97–129 (LKAQGFLTRDPRKKERKKYGRKKARKSFQFSKR) is disordered. A compositionally biased stretch (basic residues) spans 110–129 (KERKKYGRKKARKSFQFSKR).

Belongs to the universal ribosomal protein uS9 family.

In Chlamydia trachomatis serovar A (strain ATCC VR-571B / DSM 19440 / HAR-13), this protein is Small ribosomal subunit protein uS9.